Here is an 892-residue protein sequence, read N- to C-terminus: Alanine--tRNA ligase (892 aa).

Zn(2+) contacts are provided by His580, His584, Cys682, and His686.

Belongs to the class-II aminoacyl-tRNA synthetase family. It depends on Zn(2+) as a cofactor.

It localises to the cytoplasm. The catalysed reaction is tRNA(Ala) + L-alanine + ATP = L-alanyl-tRNA(Ala) + AMP + diphosphate. Functionally, catalyzes the attachment of alanine to tRNA(Ala) in a two-step reaction: alanine is first activated by ATP to form Ala-AMP and then transferred to the acceptor end of tRNA(Ala). Also edits incorrectly charged Ser-tRNA(Ala) and Gly-tRNA(Ala) via its editing domain. This chain is Alanine--tRNA ligase, found in Salinispora tropica (strain ATCC BAA-916 / DSM 44818 / JCM 13857 / NBRC 105044 / CNB-440).